Reading from the N-terminus, the 317-residue chain is Ribosomal protein L11 methyltransferase (317 aa).

The S-adenosyl-L-methionine site is built by Thr158, Gly179, Asp201, and Asn244.

It belongs to the methyltransferase superfamily. PrmA family.

It localises to the cytoplasm. It carries out the reaction L-lysyl-[protein] + 3 S-adenosyl-L-methionine = N(6),N(6),N(6)-trimethyl-L-lysyl-[protein] + 3 S-adenosyl-L-homocysteine + 3 H(+). Its function is as follows. Methylates ribosomal protein L11. The sequence is that of Ribosomal protein L11 methyltransferase from Streptococcus pyogenes serotype M12 (strain MGAS2096).